A 156-amino-acid polypeptide reads, in one-letter code: ATP synthase subunit b (156 aa).

The helical transmembrane segment at 7 to 29 (LFAQMVVFLVLAWFTMKFVWPPL) threads the bilayer.

Belongs to the ATPase B chain family. In terms of assembly, F-type ATPases have 2 components, F(1) - the catalytic core - and F(0) - the membrane proton channel. F(1) has five subunits: alpha(3), beta(3), gamma(1), delta(1), epsilon(1). F(0) has three main subunits: a(1), b(2) and c(10-14). The alpha and beta chains form an alternating ring which encloses part of the gamma chain. F(1) is attached to F(0) by a central stalk formed by the gamma and epsilon chains, while a peripheral stalk is formed by the delta and b chains.

It localises to the cell inner membrane. Functionally, f(1)F(0) ATP synthase produces ATP from ADP in the presence of a proton or sodium gradient. F-type ATPases consist of two structural domains, F(1) containing the extramembraneous catalytic core and F(0) containing the membrane proton channel, linked together by a central stalk and a peripheral stalk. During catalysis, ATP synthesis in the catalytic domain of F(1) is coupled via a rotary mechanism of the central stalk subunits to proton translocation. Component of the F(0) channel, it forms part of the peripheral stalk, linking F(1) to F(0). This is ATP synthase subunit b from Burkholderia vietnamiensis (strain G4 / LMG 22486) (Burkholderia cepacia (strain R1808)).